Consider the following 475-residue polypeptide: Integrator complex subunit 15 (475 aa).

The interval 402 to 444 is disordered; it reads YPHIHPGRPSPLSPHSPHQSTLSSPHSPHTVLTAHPTHPALAP. Residues 416–430 show a composition bias toward low complexity; it reads HSPHQSTLSSPHSPH.

It belongs to the Integrator subunit 15 family. Component of the Integrator complex, composed of core subunits INTS1, INTS2, INTS3, INTS4, INTS5, INTS6, INTS7, INTS8, INTS9/RC74, INTS10, INTS11/CPSF3L, INTS12, INTS13, INTS14 and INTS15. The core complex associates with protein phosphatase 2A subunits PPP2CA and PPP2R1A, to form the Integrator-PP2A (INTAC) complex. INTS15 is part of the tail subcomplex, composed of INTS10, INTS13, INTS14 and INTS15.

The protein localises to the nucleus. Its subcellular location is the chromosome. Functionally, component of the integrator complex, a multiprotein complex that terminates RNA polymerase II (Pol II) transcription in the promoter-proximal region of genes. The integrator complex provides a quality checkpoint during transcription elongation by driving premature transcription termination of transcripts that are unfavorably configured for transcriptional elongation: the complex terminates transcription by (1) catalyzing dephosphorylation of the C-terminal domain (CTD) of Pol II subunit POLR2A/RPB1 and SUPT5H/SPT5, (2) degrading the exiting nascent RNA transcript via endonuclease activity and (3) promoting the release of Pol II from bound DNA. The integrator complex is also involved in terminating the synthesis of non-coding Pol II transcripts, such as enhancer RNAs (eRNAs), small nuclear RNAs (snRNAs), telomerase RNAs and long non-coding RNAs (lncRNAs). INTS15 is part of the integrator tail module that acts as a platform for the recruitment of transcription factors at promoters. Within the integrator complex, INTS15 is required to bridge different integrator modules. This is Integrator complex subunit 15 (ints15) from Danio rerio (Zebrafish).